The sequence spans 71 residues: Paralithocin 2 (71 aa).

Residues 1-23 (MGAAKVLLVVLAVMVAVPNLAEG) form the signal peptide. Intrachain disulfides connect Cys29–Cys58, Cys34–Cys54, Cys39–Cys52, and Cys44–Cys55. Arginine amide; partial is present on Arg70.

It belongs to the paralithocin family. Post-translationally, the amidated form is probably the active form.

Has antibacterial activity, mainly against marine Gram-positive bacteria like C.maltaromaticum (MIC=50 uM), C.mobile (MIC=50 uM), C.divergens (MIC=50 uM) and C.funditum (MIC=25 uM) but also against C.glutamicum (MIC=12.5 uM). Has very little or no activity against Gram-negative bacteria. The protein is Paralithocin 2 of Paralithodes camtschaticus (Red king crab).